Reading from the N-terminus, the 238-residue chain is Uridylate kinase (238 aa).

Residue 12–15 coordinates ATP; it reads KLSG. Residue G54 coordinates UMP. Residues G55 and R59 each contribute to the ATP site. UMP is bound by residues D74 and 135 to 142; that span reads TGNPFFTT. Residues T162, Y168, and D171 each contribute to the ATP site.

Belongs to the UMP kinase family. In terms of assembly, homohexamer.

The protein resides in the cytoplasm. It catalyses the reaction UMP + ATP = UDP + ADP. Its pathway is pyrimidine metabolism; CTP biosynthesis via de novo pathway; UDP from UMP (UMPK route): step 1/1. Its activity is regulated as follows. Inhibited by UTP. In terms of biological role, catalyzes the reversible phosphorylation of UMP to UDP. The sequence is that of Uridylate kinase from Bordetella avium (strain 197N).